The following is a 209-amino-acid chain: SAGA-associated factor 11 homolog 1 (209 aa).

Residues 1 to 36 (MSRTIVVKNPRTSGKDEDKAQIPSQDELPSGSSGAK) are disordered. An SGF11-type zinc finger spans residues 120–141 (CCCPNCERMVAAVRFAPHLQTC). The span at 156 to 166 (LTVSSRSSSTS) shows a compositional bias: low complexity. Residues 156 to 209 (LTVSSRSSSTSTGGGQANEKSTDDEDWSLDSRPGKSTKNSRNKGSKKNQKNKLK) are disordered. The span at 193–209 (KNSRNKGSKKNQKNKLK) shows a compositional bias: basic residues.

The protein belongs to the SGF11 family. Component of some SAGA transcription coactivator-HAT complexes, at least composed of Ada2b, not/nonstop, Pcaf/Gcn5, Sgf11 and Spt3. Within the SAGA complex, Sgf11, e(y)2, and not/nonstop form an additional subcomplex of SAGA called the DUB module (deubiquitination module). Interacts directly with not/nonstop. Interacts with the AMEX complex component xmas-2. Interacts with Cbp80; important for promoter recruitment of Sgf11 that is not associated with the DUB module.

It is found in the nucleus. Its subcellular location is the nucleoplasm. The protein localises to the cytoplasm. In terms of biological role, component of the transcription regulatory histone acetylation (HAT) complex SAGA, a multiprotein complex that activates transcription by remodeling chromatin and mediating histone acetylation and deubiquitination. Within the SAGA complex, participates in a subcomplex that specifically deubiquitinates histone H2B. The SAGA complex is recruited to specific gene promoters by activators, where it is required for transcription. Required for nuclear receptor-mediated transactivation. Binds independently on SAGA to promoters in an RNA-dependent manner. Binds to mRNA and is essential for total mRNA export from the nucleus. Required to counteract heterochromatin silencing. Controls the development of neuronal connectivity in visual system by being required for accurate axon targeting in the optic lobe. Required for expression of ecdysone-induced genes such as br/broad. The chain is SAGA-associated factor 11 homolog 1 from Drosophila willistoni (Fruit fly).